A 389-amino-acid chain; its full sequence is Cuticlin-3 (389 aa).

The signal sequence occupies residues 1–19 (MARYSLGLGLCLLVASVSA). Residues 20–354 (IPVDNNVEGE…ELCISSFHIS (335 aa)) are Extracellular-facing. The region spanning 33-278 (ECGPTSITVN…PTCSEPQGFG (246 aa)) is the ZP domain. Asparagine 284 is a glycosylation site (N-linked (GlcNAc...) asparagine). A helical membrane pass occupies residues 355-375 (VVTVFLGLTVFVAIFITYMIV). Over 376-389 (SRMMVPSDKMQSAC) the chain is Cytoplasmic.

It is found in the cell membrane. Functionally, plays a role in alae formation in L1 larvae. The polypeptide is Cuticlin-3 (Caenorhabditis elegans).